The primary structure comprises 1376 residues: Major capsid protein (1376 aa).

It belongs to the herpesviridae major capsid protein family. Homomultimer. Makes the hexons and eleven out of twelve pentons. Interacts with triplex proteins 1/TRX1 and 2/TRX2; adjacent capsomers are linked together in groups of three by triplexes, heterotrimeric complexes composed of one molecule of TRX1 and two molecules of TRX2. Interacts with scaffold protein; this interaction allows efficient MCP transport to the host nucleus. Interacts with capsid vertex component 2/CVC2. Interacts with the small capsomere-interacting protein/SCP.

The protein resides in the virion. It is found in the host nucleus. Self-assembles to form an icosahedral capsid with a T=16 symmetry, about 200 nm in diameter, and consisting of 150 hexons and 12 pentons (total of 162 capsomers). Hexons form the edges and faces of the capsid and are each composed of six MCP molecules. In contrast, one penton is found at each of the 12 vertices. Eleven of the pentons are MCP pentamers, while the last vertex is occupied by the portal complex. The capsid is surrounded by a layer of proteinaceous material designated the tegument which, in turn, is enclosed in an envelope of host cell-derived lipids containing virus-encoded glycoproteins. In Equus caballus (Horse), this protein is Major capsid protein.